Consider the following 270-residue polypeptide: Calpain small subunit 1 (270 aa).

Met1 bears the N-acetylmethionine mark. The residue at position 6 (Ser6) is a Phosphoserine. An EF-hand 1; atypical domain is found at 98–132; the sequence is EEERQFRKLFVQLAGDDMEVSATELMNILNKVVTR. The Ca(2+) site is built by Ala111, Asp114, Glu116, Glu121, Asp139, Asp154, Asp156, Thr158, Lys160, and Glu165. 4 consecutive EF-hand domains span residues 141–174, 171–206, 207–235, and 236–270; these read FGID…NNIK, NNIK…AGFH, LNQH…ISCL, and VRLD…TMYS. Lys181 carries the post-translational modification N6-acetyllysine. Ca(2+) is bound by residues Asp184, Asp186, Ser188, Thr190, Glu195, and Asp227.

In terms of assembly, homodimer or heterodimer of a large (catalytic) and a small (regulatory) subunit. In presence of calcium, the heterodimer dissociates.

The protein resides in the cytoplasm. It localises to the cell membrane. In terms of biological role, regulatory subunit of the calcium-regulated non-lysosomal thiol-protease which catalyzes limited proteolysis of substrates involved in cytoskeletal remodeling and signal transduction. Essential for embryonic development. The sequence is that of Calpain small subunit 1 (Capns1) from Rattus norvegicus (Rat).